The sequence spans 235 residues: Ribosomal RNA small subunit methyltransferase G (235 aa).

S-adenosyl-L-methionine contacts are provided by residues Gly-98, Met-103, 149-150 (VE), and Arg-164.

This sequence belongs to the methyltransferase superfamily. RNA methyltransferase RsmG family.

Its subcellular location is the cytoplasm. The catalysed reaction is guanosine(527) in 16S rRNA + S-adenosyl-L-methionine = N(7)-methylguanosine(527) in 16S rRNA + S-adenosyl-L-homocysteine. In terms of biological role, specifically methylates the N7 position of guanine in position 527 of 16S rRNA. The sequence is that of Ribosomal RNA small subunit methyltransferase G from Cupriavidus pinatubonensis (strain JMP 134 / LMG 1197) (Cupriavidus necator (strain JMP 134)).